The primary structure comprises 210 residues: Protein GrpE (210 aa).

Disordered regions lie at residues M1–I40 and K191–A210. Residues D11 to A23 are compositionally biased toward low complexity.

The protein belongs to the GrpE family. Homodimer.

It is found in the cytoplasm. Functionally, participates actively in the response to hyperosmotic and heat shock by preventing the aggregation of stress-denatured proteins, in association with DnaK and GrpE. It is the nucleotide exchange factor for DnaK and may function as a thermosensor. Unfolded proteins bind initially to DnaJ; upon interaction with the DnaJ-bound protein, DnaK hydrolyzes its bound ATP, resulting in the formation of a stable complex. GrpE releases ADP from DnaK; ATP binding to DnaK triggers the release of the substrate protein, thus completing the reaction cycle. Several rounds of ATP-dependent interactions between DnaJ, DnaK and GrpE are required for fully efficient folding. The sequence is that of Protein GrpE from Rhizobium johnstonii (strain DSM 114642 / LMG 32736 / 3841) (Rhizobium leguminosarum bv. viciae).